A 488-amino-acid chain; its full sequence is Proline--tRNA ligase (488 aa).

It belongs to the class-II aminoacyl-tRNA synthetase family. ProS type 3 subfamily. As to quaternary structure, homodimer.

It is found in the cytoplasm. The catalysed reaction is tRNA(Pro) + L-proline + ATP = L-prolyl-tRNA(Pro) + AMP + diphosphate. Its function is as follows. Catalyzes the attachment of proline to tRNA(Pro) in a two-step reaction: proline is first activated by ATP to form Pro-AMP and then transferred to the acceptor end of tRNA(Pro). The sequence is that of Proline--tRNA ligase from Borreliella afzelii (strain PKo) (Borrelia afzelii).